A 207-amino-acid polypeptide reads, in one-letter code: Imidazole glycerol phosphate synthase subunit HisH (207 aa).

The Glutamine amidotransferase type-1 domain maps to 1–207 (MIAIVDYNMG…ENFTKYRNLK (207 aa)). Cysteine 79 acts as the Nucleophile in catalysis. Catalysis depends on residues histidine 185 and glutamate 187.

Heterodimer of HisH and HisF.

The protein localises to the cytoplasm. It catalyses the reaction 5-[(5-phospho-1-deoxy-D-ribulos-1-ylimino)methylamino]-1-(5-phospho-beta-D-ribosyl)imidazole-4-carboxamide + L-glutamine = D-erythro-1-(imidazol-4-yl)glycerol 3-phosphate + 5-amino-1-(5-phospho-beta-D-ribosyl)imidazole-4-carboxamide + L-glutamate + H(+). It carries out the reaction L-glutamine + H2O = L-glutamate + NH4(+). The protein operates within amino-acid biosynthesis; L-histidine biosynthesis; L-histidine from 5-phospho-alpha-D-ribose 1-diphosphate: step 5/9. Its function is as follows. IGPS catalyzes the conversion of PRFAR and glutamine to IGP, AICAR and glutamate. The HisH subunit catalyzes the hydrolysis of glutamine to glutamate and ammonia as part of the synthesis of IGP and AICAR. The resulting ammonia molecule is channeled to the active site of HisF. The protein is Imidazole glycerol phosphate synthase subunit HisH of Sulfurimonas denitrificans (strain ATCC 33889 / DSM 1251) (Thiomicrospira denitrificans (strain ATCC 33889 / DSM 1251)).